The following is a 697-amino-acid chain: Histone-lysine N-methyltransferase SETDB2 (697 aa).

An MBD domain is found at 172-242; the sequence is LKKENPLNLP…DNFSFSTQVQ (71 aa). One can recognise a Pre-SET domain in the interval 304–378; it reads KCCSCTDGCL…LCQNRVVQHG (75 aa). Residues Cys-306, Cys-308, Cys-312, Cys-318, Cys-320, Cys-359, Cys-363, Cys-365, and Cys-370 each coordinate Zn(2+). Residues 381–672 form the SET domain; the sequence is LRLQVFKTDT…AGTELTWDYN (292 aa). 391–393 provides a ligand contact to S-adenosyl-L-methionine; sequence KGW. 2 disordered regions span residues 438 to 461 and 529 to 605; these read KEDN…HSDS and VHNS…STSP. Over residues 565-581 the composition is skewed to low complexity; that stretch reads SGYVSEESSSSVISGGH. S-adenosyl-L-methionine is bound by residues Arg-626 and 629–630; that span reads NH. 4 residues coordinate Zn(2+): Cys-632, Cys-685, Cys-687, and Cys-692.

Belongs to the class V-like SAM-binding methyltransferase superfamily.

The protein localises to the nucleus. It localises to the chromosome. It carries out the reaction N(6),N(6)-dimethyl-L-lysyl(9)-[histone H3] + S-adenosyl-L-methionine = N(6),N(6),N(6)-trimethyl-L-lysyl(9)-[histone H3] + S-adenosyl-L-homocysteine + H(+). Its function is as follows. Histone methyltransferase involved in left-right axis specification in early development and mitosis. Specifically trimethylates 'Lys-9' of histone H3 (H3K9me3). H3K9me3 represents a specific tag for epigenetic transcriptional repression by recruiting HP1 (CBX1, CBX3 and/or CBX5) proteins to methylated histones. Contributes to H3K9me3 in both the interspersed repetitive elements and centromere-associated repeats. Plays a role in chromosome condensation and segregation during mitosis. The protein is Histone-lysine N-methyltransferase SETDB2 (setdb2) of Xenopus tropicalis (Western clawed frog).